The primary structure comprises 662 residues: Methyl-accepting chemotaxis protein McpB (662 aa).

The Cytoplasmic portion of the chain corresponds to 1–16 (MKTFINWLKKPSISKK). Residues 17 to 37 (LIVSFIAILIIPILILEFSSY) traverse the membrane as a helical segment. Topologically, residues 38-282 (RSASGKLDQE…IKDASKSVLT (245 aa)) are extracellular. One can recognise a Cache domain in the interval 153-229 (VTDPYVAASD…KAGEKLSGDW (77 aa)). A helical transmembrane segment spans residues 283-303 (TGMIVLIASIVAGGILILFIV). The 53-residue stretch at 304–356 (RSITKPLKRLVQSSKTISRGDLTETIEIHSKDELGELGESFNEMGQSLRSLIS) folds into the HAMP domain. Residues 304 to 662 (RSITKPLKRL…RDLTKQFKIE (359 aa)) are Cytoplasmic-facing. Glutamine 371 and glutamine 595 each carry glutamate methyl ester (Gln). The Methyl-accepting transducer domain occupies 375 to 611 (SAGQTSKATE…HVSAAVSGIA (237 aa)). A glutamate methyl ester (Glu) mark is found at glutamate 630 and glutamate 637.

It belongs to the methyl-accepting chemotaxis (MCP) protein family. Interacts with FloT. Post-translationally, some glutamine residues are deamidated to glutamate by CheD and subsequently methylated. The demethylation is selective. Gln-371 is demethylated only upon asparagine addition whereas Glu-637 is demethylated only upon asparagine removal. Glu-630 appears indiscriminate and is demethylated upon both addition and removal of asparagine.

Its subcellular location is the cell membrane. It is found in the membrane raft. Its function is as follows. Chemotactic-signal transducers respond to changes in the concentration of attractants and repellents in the environment, transduce a signal from the outside to the inside of the cell, and facilitate sensory adaptation through the variation of the level of methylation. All amino acids serve as attractants in B.subtilis, they appear to cause an increase in the turnover methyl groups, leading to methylation of an unidentified acceptor, while repellents have been shown to cause a decrease in methyl group turnover. The methyl groups are added by a methyltransferase and removed by a methylesterase. McpB is required for taxis towards asparagine, aspartate, glutamine, and histidine. The chain is Methyl-accepting chemotaxis protein McpB (mcpB) from Bacillus subtilis (strain 168).